A 321-amino-acid polypeptide reads, in one-letter code: Tet-like dioxygenase 1 (321 aa).

The Fe2OG dioxygenase domain maps to 198–298; it reads DSYYALNNCL…RIGLVYFAHK (101 aa). 2-oxoglutarate-binding residues include asparagine 214 and arginine 224. Fe cation-binding residues include histidine 229 and aspartate 231. Tyrosine 242 is a 2-oxoglutarate binding site. Residue histidine 279 coordinates Fe cation. Arginine 289 lines the 2-oxoglutarate pocket. A substrate-binding site is contributed by glutamine 310.

It depends on Fe(2+) as a cofactor.

It catalyses the reaction a 5-methyl-2'-deoxycytidine in DNA + 2-oxoglutarate + O2 = a 5-hydroxymethyl-2'-deoxycytidine in DNA + succinate + CO2. It carries out the reaction a 5-hydroxymethyl-2'-deoxycytidine in DNA + 2-oxoglutarate + O2 = a 5-formyl-2'-deoxycytidine in DNA + succinate + CO2 + H2O. The enzyme catalyses a 5-formyl-2'-deoxycytidine in DNA + 2-oxoglutarate + O2 = a 5-carboxyl-2'-deoxycytidine in DNA + succinate + CO2 + H(+). Its function is as follows. Dioxygenase that catalyzes the conversion of the modified genomic base 5-methylcytosine (5mC) into 5-hydroxymethylcytosine (5hmC), and thereby plays a role in active DNA demethylation. Also mediates subsequent conversion of 5hmC into 5-formylcytosine (5fC), and conversion of 5fC to 5-carboxylcytosine (5caC). This chain is Tet-like dioxygenase 1, found in Naegleria gruberi (Amoeba).